The sequence spans 524 residues: 2-isopropylmalate synthase (524 aa).

One can recognise a Pyruvate carboxyltransferase domain in the interval 12 to 274 (VIIFDTTLRD…WNNIETTMLT (263 aa)). Positions 21, 209, 211, and 245 each coordinate Mn(2+). Residues 398–524 (KLNSLTVIAG…EAVPAVAAAG (127 aa)) are regulatory domain.

It belongs to the alpha-IPM synthase/homocitrate synthase family. LeuA type 1 subfamily. Homodimer. The cofactor is Mn(2+).

The protein localises to the cytoplasm. The catalysed reaction is 3-methyl-2-oxobutanoate + acetyl-CoA + H2O = (2S)-2-isopropylmalate + CoA + H(+). The protein operates within amino-acid biosynthesis; L-leucine biosynthesis; L-leucine from 3-methyl-2-oxobutanoate: step 1/4. In terms of biological role, catalyzes the condensation of the acetyl group of acetyl-CoA with 3-methyl-2-oxobutanoate (2-ketoisovalerate) to form 3-carboxy-3-hydroxy-4-methylpentanoate (2-isopropylmalate). The sequence is that of 2-isopropylmalate synthase from Rhodopseudomonas palustris (strain HaA2).